Reading from the N-terminus, the 276-residue chain is Extracellular metalloprotease VDBG_07883 (276 aa).

Residues Met1 to Ala17 form the signal peptide. Asn70 and Asn102 each carry an N-linked (GlcNAc...) asparagine glycan. Residue His191 coordinates Zn(2+). The active site involves Glu192. His195 contributes to the Zn(2+) binding site. N-linked (GlcNAc...) asparagine glycosylation is present at Asn222. Cysteines 227 and 254 form a disulfide.

The protein belongs to the peptidase M43B family.

Its subcellular location is the secreted. Secreted metalloproteinase that allows assimilation of proteinaceous substrates. This Verticillium alfalfae (strain VaMs.102 / ATCC MYA-4576 / FGSC 10136) (Verticillium wilt of alfalfa) protein is Extracellular metalloprotease VDBG_07883.